Here is a 512-residue protein sequence, read N- to C-terminus: ATP synthase subunit alpha (512 aa).

Position 169–176 (169–176 (GDRQTGKT)) interacts with ATP.

Belongs to the ATPase alpha/beta chains family. F-type ATPases have 2 components, CF(1) - the catalytic core - and CF(0) - the membrane proton channel. CF(1) has five subunits: alpha(3), beta(3), gamma(1), delta(1), epsilon(1). CF(0) has four main subunits: a(1), b(1), b'(1) and c(9-12).

It is found in the cell inner membrane. The enzyme catalyses ATP + H2O + 4 H(+)(in) = ADP + phosphate + 5 H(+)(out). Functionally, produces ATP from ADP in the presence of a proton gradient across the membrane. The alpha chain is a regulatory subunit. The polypeptide is ATP synthase subunit alpha (Roseobacter denitrificans (strain ATCC 33942 / OCh 114) (Erythrobacter sp. (strain OCh 114))).